A 351-amino-acid chain; its full sequence is Anthranilate phosphoribosyltransferase (351 aa).

Residues Gly80, 83 to 84 (GD), Thr88, 90 to 93 (NIST), 108 to 116 (KHGNRSITS), and Ser120 each bind 5-phospho-alpha-D-ribose 1-diphosphate. Gly80 contributes to the anthranilate binding site. Position 92 (Ser92) interacts with Mg(2+). Position 111 (Asn111) interacts with anthranilate. Residue Arg166 coordinates anthranilate. Positions 229 and 230 each coordinate Mg(2+).

This sequence belongs to the anthranilate phosphoribosyltransferase family. In terms of assembly, homodimer. Requires Mg(2+) as cofactor.

It catalyses the reaction N-(5-phospho-beta-D-ribosyl)anthranilate + diphosphate = 5-phospho-alpha-D-ribose 1-diphosphate + anthranilate. It functions in the pathway amino-acid biosynthesis; L-tryptophan biosynthesis; L-tryptophan from chorismate: step 2/5. Catalyzes the transfer of the phosphoribosyl group of 5-phosphorylribose-1-pyrophosphate (PRPP) to anthranilate to yield N-(5'-phosphoribosyl)-anthranilate (PRA). The chain is Anthranilate phosphoribosyltransferase from Chlorobaculum tepidum (strain ATCC 49652 / DSM 12025 / NBRC 103806 / TLS) (Chlorobium tepidum).